A 396-amino-acid chain; its full sequence is Ribosomal RNA large subunit methyltransferase I (396 aa).

The PUA domain occupies 2-81 (TVRLILAKGR…EVIDCAFFIR (80 aa)).

The protein belongs to the methyltransferase superfamily. RlmI family.

The protein localises to the cytoplasm. The catalysed reaction is cytidine(1962) in 23S rRNA + S-adenosyl-L-methionine = 5-methylcytidine(1962) in 23S rRNA + S-adenosyl-L-homocysteine + H(+). Functionally, specifically methylates the cytosine at position 1962 (m5C1962) of 23S rRNA. This chain is Ribosomal RNA large subunit methyltransferase I, found in Yersinia pestis bv. Antiqua (strain Antiqua).